Consider the following 360-residue polypeptide: Phospho-N-acetylmuramoyl-pentapeptide-transferase (360 aa).

10 helical membrane-spanning segments follow: residues 26-46, 72-92, 94-114, 132-152, 168-188, 199-219, 236-256, 263-283, 288-308, and 338-358; these read AIVSLLTALFISLWMGPRMIA, PTMGGIMILTAITVSVLLWAY, SNPYVWCVLTVLIGYGIIGFV, WKYFWMSVIALGVAFALYLAG, VMPQLGLLYILLAYFVIVGTG, GLAIMPTVFVAAGFALVAWAT, AGELVIVCTAIVGAGLGFLWF, VFMGDVGSLALGGALGIIAVL, FLLVIMGGVFVVETLSVILQV, and VIVRFWIISLMLVLIGLATLK.

It belongs to the glycosyltransferase 4 family. MraY subfamily. Requires Mg(2+) as cofactor.

It localises to the cell inner membrane. The enzyme catalyses UDP-N-acetyl-alpha-D-muramoyl-L-alanyl-gamma-D-glutamyl-meso-2,6-diaminopimeloyl-D-alanyl-D-alanine + di-trans,octa-cis-undecaprenyl phosphate = di-trans,octa-cis-undecaprenyl diphospho-N-acetyl-alpha-D-muramoyl-L-alanyl-D-glutamyl-meso-2,6-diaminopimeloyl-D-alanyl-D-alanine + UMP. It functions in the pathway cell wall biogenesis; peptidoglycan biosynthesis. Catalyzes the initial step of the lipid cycle reactions in the biosynthesis of the cell wall peptidoglycan: transfers peptidoglycan precursor phospho-MurNAc-pentapeptide from UDP-MurNAc-pentapeptide onto the lipid carrier undecaprenyl phosphate, yielding undecaprenyl-pyrophosphoryl-MurNAc-pentapeptide, known as lipid I. The protein is Phospho-N-acetylmuramoyl-pentapeptide-transferase of Klebsiella pneumoniae (strain 342).